Reading from the N-terminus, the 419-residue chain is MKHQRVIVLGAGVTGKSVAEFLHSRGSYVIGIDGSLDALNSCSFFHERYLDTIEEFPEDMDLFVRSPGVKPSHSLVVEAKRRGIPIVTDVQLAFQDPEFHRYPSIGITGSAGKTTTVLFLVHLLRSMGMGAFAMGNIGVPILQAMREKGIRVVEISSFQLTEQEIETPVLSGAAILNISENHLDYHQSLQNYSEAKRNITKCLQSVESLWVGEWLSPGKSYLDYTKEIASVLDKGSALKPLYLHDRSNYCAAYALANEISNVPLEAFLQALQTFEKPPHRIEYLGEKDGVSYINDSKATTMSSVEKALIAVKENVIVILGGRNKGSDFTSLIPILTQTVKHIVAMGECRNEIAQALSGSLPLTQARDLQEAVSMAQSIAQPGDVILLSPGCASFDQFRSFEERGDCFRQLVGDMEALRV.

An ATP-binding site is contributed by 109-115 (GSAGKTT).

The protein belongs to the MurCDEF family.

The protein localises to the cytoplasm. It catalyses the reaction UDP-N-acetyl-alpha-D-muramoyl-L-alanine + D-glutamate + ATP = UDP-N-acetyl-alpha-D-muramoyl-L-alanyl-D-glutamate + ADP + phosphate + H(+). It functions in the pathway cell wall biogenesis; peptidoglycan biosynthesis. In terms of biological role, cell wall formation. Catalyzes the addition of glutamate to the nucleotide precursor UDP-N-acetylmuramoyl-L-alanine (UMA). This Chlamydia caviae (strain ATCC VR-813 / DSM 19441 / 03DC25 / GPIC) (Chlamydophila caviae) protein is UDP-N-acetylmuramoylalanine--D-glutamate ligase.